Consider the following 99-residue polypeptide: Sperm protein associated with the nucleus on the X chromosome N4 (99 aa).

The span at 1 to 10 shows a compositional bias: polar residues; that stretch reads MEEPTSSTNE. The tract at residues 1-99 is disordered; it reads MEEPTSSTNE…AGSPQDGGQN (99 aa). Positions 11–22 are enriched in basic and acidic residues; sequence NKMKSPCESNKR. Basic residues predominate over residues 23–32; that stretch reads KVDKKKKNLH. The segment covering 64 to 78 has biased composition (polar residues); the sequence is SNQLENNQPTESSTD.

The protein belongs to the SPAN-X family.

The protein is Sperm protein associated with the nucleus on the X chromosome N4 (SPANXN4) of Homo sapiens (Human).